The following is a 243-amino-acid chain: Uridylate kinase (243 aa).

15 to 18 is an ATP binding site; that stretch reads KLSG. Positions 23 to 28 are involved in allosteric activation by GTP; the sequence is GEEGFG. Residue Gly57 coordinates UMP. The ATP site is built by Gly58 and Arg62. UMP-binding positions include Asp77 and 138 to 145; that span reads TGNPFFTT. Residues Thr165, Phe171, and Asp174 each contribute to the ATP site.

The protein belongs to the UMP kinase family. As to quaternary structure, homohexamer.

It is found in the cytoplasm. The catalysed reaction is UMP + ATP = UDP + ADP. The protein operates within pyrimidine metabolism; CTP biosynthesis via de novo pathway; UDP from UMP (UMPK route): step 1/1. Allosterically activated by GTP. Inhibited by UTP. Its function is as follows. Catalyzes the reversible phosphorylation of UMP to UDP. The polypeptide is Uridylate kinase (Aliivibrio fischeri (strain ATCC 700601 / ES114) (Vibrio fischeri)).